The primary structure comprises 617 residues: MHSPGAAAYVFLQCLVALVAAVIAQSGADQPPTTVVEVTAHGSVSMTPPTPRSPLLNETELVELNQPGSTAVFVALPTNPPTVSVDSSSTTTVASTQEPTSTTERTMSPEEIQKLLLPPATVEADILHVNATDDNRPDAKSSGKDSECPTLEGADHLSQTQLLTRLTHVCRYDRLERPKRESINGTNGPVKVYARAYIYFMQNLEAHDLQFKIHALLQFRYVDPRLVFREVAPNRTKPIMGEQSLRDLLWVPHVFLANERSSDILGTAEKDILTSISPDGTVIVSTRISATLYCWMNLQKFPFDEQHCSTVLESWMYNEDDLVLLWEHKSPVTLAPELHLTEYVLLEMFTNETVINADLSDLRHGAFAGNYSSLSFTVHLAREMGFYMMDYFIPSIMLVAISWVTFWLQADQSAPRITLGTSTMLTFITLASAQGKTLPKVSYIKASEIWFLGCTGFIFGSLVEFAFVNTIWRRKRNVEVKKVNSKHVLKQAITPRPARKDMSGLHKSHSCTSLADSATTVSANSFNNYLTVHSIPQKSPSSATLPIISTTDVDRAMTEASNVTIQIEGQTSNVNGNGWTTMTPQEVAIWIDKRSRFVFPIAFVIFNIFYWTFVYYV.

An N-terminal signal peptide occupies residues 1 to 28; the sequence is MHSPGAAAYVFLQCLVALVAAVIAQSGA. Residues 29–387 are Extracellular-facing; that stretch reads DQPPTTVVEV…VHLAREMGFY (359 aa). N-linked (GlcNAc...) asparagine glycosylation occurs at Asn57. Low complexity predominate over residues 82–96; that stretch reads TVSVDSSSTTTVAST. The segment at 82-110 is disordered; it reads TVSVDSSSTTTVASTQEPTSTTERTMSPE. Residues 97 to 106 are compositionally biased toward polar residues; sequence QEPTSTTERT. Residue Asn130 is glycosylated (N-linked (GlcNAc...) asparagine). Residues 131 to 147 show a composition bias toward basic and acidic residues; the sequence is ATDDNRPDAKSSGKDSE. A disordered region spans residues 131–155; it reads ATDDNRPDAKSSGKDSECPTLEGAD. N-linked (GlcNAc...) asparagine glycans are attached at residues Asn184, Asn234, Asn351, and Asn370. Residues 388–408 form a helical membrane-spanning segment; the sequence is MMDYFIPSIMLVAISWVTFWL. Residues 409-414 are Cytoplasmic-facing; the sequence is QADQSA. Residues 415-434 traverse the membrane as a helical segment; it reads PRITLGTSTMLTFITLASAQ. Topologically, residues 435–447 are extracellular; sequence GKTLPKVSYIKAS. A helical transmembrane segment spans residues 448–468; the sequence is EIWFLGCTGFIFGSLVEFAFV. Residues 469-596 are Cytoplasmic-facing; that stretch reads NTIWRRKRNV…VAIWIDKRSR (128 aa). A helical transmembrane segment spans residues 597–617; the sequence is FVFPIAFVIFNIFYWTFVYYV.

The protein belongs to the ligand-gated ion channel (TC 1.A.9) family.

It is found in the cell membrane. The enzyme catalyses chloride(in) = chloride(out). Ligand and pH-gated channel that mediates chloride transport in the mid-gut and thereby may function in larval metabolism and fluid homeostasis. Channel opening is triggered by zinc binding or, to a lesser extent, an increase in extracellular pH. This chain is pH-sensitive chloride channel 2, found in Anopheles gambiae (African malaria mosquito).